We begin with the raw amino-acid sequence, 363 residues long: Probable transglycosylase BTH_I0986 (363 aa).

Belongs to the glycosyltransferase group 1 family. Glycosyltransferase 4 subfamily.

Functionally, probably a transglycosylase. Probably involved in synthesis of the outer membrane receptor for a cellular contact-dependent growth inhibition (CDI) system. In Burkholderia thailandensis (strain ATCC 700388 / DSM 13276 / CCUG 48851 / CIP 106301 / E264), this protein is Probable transglycosylase BTH_I0986.